Here is a 263-residue protein sequence, read N- to C-terminus: Glutamate racemase (263 aa).

Residues 10 to 11 (DS) and 42 to 43 (YG) each bind substrate. Cys73 acts as the Proton donor/acceptor in catalysis. 74 to 75 (NS) is a substrate binding site. The active-site Proton donor/acceptor is the Cys183. Residue 184–185 (TH) coordinates substrate.

The protein belongs to the aspartate/glutamate racemases family.

The catalysed reaction is L-glutamate = D-glutamate. Its pathway is cell wall biogenesis; peptidoglycan biosynthesis. Provides the (R)-glutamate required for cell wall biosynthesis. In Acidothermus cellulolyticus (strain ATCC 43068 / DSM 8971 / 11B), this protein is Glutamate racemase.